A 338-amino-acid polypeptide reads, in one-letter code: Aspartate-semialdehyde dehydrogenase (338 aa).

Residues 13–16 (TGNV) and 41–42 (NS) each bind NADP(+). Arginine 101 provides a ligand contact to phosphate. Residue cysteine 132 is the Acyl-thioester intermediate of the active site. Residue glutamine 159 participates in substrate binding. NADP(+) is bound by residues 162 to 163 (SG) and proline 187. Phosphate is bound at residue lysine 216. Arginine 237 provides a ligand contact to substrate. The Proton acceptor role is filled by histidine 244. Residue asparagine 317 participates in NADP(+) binding.

This sequence belongs to the aspartate-semialdehyde dehydrogenase family. Homodimer.

It carries out the reaction L-aspartate 4-semialdehyde + phosphate + NADP(+) = 4-phospho-L-aspartate + NADPH + H(+). Its pathway is amino-acid biosynthesis; L-lysine biosynthesis via DAP pathway; (S)-tetrahydrodipicolinate from L-aspartate: step 2/4. It functions in the pathway amino-acid biosynthesis; L-methionine biosynthesis via de novo pathway; L-homoserine from L-aspartate: step 2/3. The protein operates within amino-acid biosynthesis; L-threonine biosynthesis; L-threonine from L-aspartate: step 2/5. In terms of biological role, catalyzes the NADPH-dependent formation of L-aspartate-semialdehyde (L-ASA) by the reductive dephosphorylation of L-aspartyl-4-phosphate. The sequence is that of Aspartate-semialdehyde dehydrogenase from Rickettsia typhi (strain ATCC VR-144 / Wilmington).